The chain runs to 77 residues: UPF0346 protein lin1971 (77 aa).

This sequence belongs to the UPF0346 family.

The sequence is that of UPF0346 protein lin1971 from Listeria innocua serovar 6a (strain ATCC BAA-680 / CLIP 11262).